The chain runs to 816 residues: Fibroblast growth factor receptor (816 aa).

A signal peptide spans Met1–Gly19. The Extracellular segment spans residues Leu20–Val370. N-linked (GlcNAc...) asparagine glycosylation is found at Asn21, Asn69, Asn119, Asn156, Asn171, Asn244, Asn274, Asn313, and Asn321. The Ig-like C2-type 1 domain occupies Pro25 to Gln105. A disulfide bond links Cys43 and Cys94. An Ig-like C2-type 2 domain is found at Leu126–Glu217. A disulfide bridge connects residues Cys147 and Cys201. The helical transmembrane segment at Ile371–Phe391 threads the bilayer. Residues Ile392–Ser816 are Cytoplasmic-facing. The 274-residue stretch at Leu474–Leu747 folds into the Protein kinase domain. ATP contacts are provided by residues Leu480 to Val488 and Lys508. Asp612 acts as the Proton acceptor in catalysis. Phosphotyrosine; by autocatalysis is present on Tyr643.

It belongs to the protein kinase superfamily. Tyr protein kinase family. Fibroblast growth factor receptor subfamily.

It localises to the membrane. The catalysed reaction is L-tyrosyl-[protein] + ATP = O-phospho-L-tyrosyl-[protein] + ADP + H(+). In terms of biological role, receptor for basic fibroblast growth factor. This chain is Fibroblast growth factor receptor (FGFR), found in Hydra vulgaris (Hydra).